Consider the following 247-residue polypeptide: MKEMMMSNMFNDVPTPWAMFFQDSATPNMEGMLELHNNVVFYLCMMLGFVTFMLYNMLTTYNKSVMPYKYLNQGQFMEMMWTTLPAVMLLMIAFPSFILLYMCDEVMAPAMTIKAMGLQWYWKYEYSDFMDEKGDTMEFESYMIPEDLLDEGQLRQLDVDAPIVCPVDTHIRFMVTAADVMHDFSVPSLGLKIDAVPGRLNQMSALMQREGVYYGQCSELCGVMHSSMPMKVEAVPTADFLAWIDEQ.

Residues 1–38 are Mitochondrial intermembrane-facing; sequence MKEMMMSNMFNDVPTPWAMFFQDSATPNMEGMLELHNN. A helical membrane pass occupies residues 39–58; the sequence is VVFYLCMMLGFVTFMLYNML. Residues 59–78 lie on the Mitochondrial matrix side of the membrane; sequence TTYNKSVMPYKYLNQGQFME. The chain crosses the membrane as a helical span at residues 79–103; the sequence is MMWTTLPAVMLLMIAFPSFILLYMC. The Mitochondrial intermembrane portion of the chain corresponds to 104–247; sequence DEVMAPAMTI…ADFLAWIDEQ (144 aa). His182, Cys217, Glu219, Cys221, His225, and Met228 together coordinate Cu cation. A Mg(2+)-binding site is contributed by Glu219.

The protein belongs to the cytochrome c oxidase subunit 2 family. In terms of assembly, component of the cytochrome c oxidase (complex IV, CIV), a multisubunit enzyme composed of a catalytic core of 3 subunits and several supernumerary subunits. The complex exists as a monomer or a dimer and forms supercomplexes (SCs) in the inner mitochondrial membrane with ubiquinol-cytochrome c oxidoreductase (cytochrome b-c1 complex, complex III, CIII). It depends on Cu cation as a cofactor.

It localises to the mitochondrion inner membrane. The enzyme catalyses 4 Fe(II)-[cytochrome c] + O2 + 8 H(+)(in) = 4 Fe(III)-[cytochrome c] + 2 H2O + 4 H(+)(out). Its function is as follows. Component of the cytochrome c oxidase, the last enzyme in the mitochondrial electron transport chain which drives oxidative phosphorylation. The respiratory chain contains 3 multisubunit complexes succinate dehydrogenase (complex II, CII), ubiquinol-cytochrome c oxidoreductase (cytochrome b-c1 complex, complex III, CIII) and cytochrome c oxidase (complex IV, CIV), that cooperate to transfer electrons derived from NADH and succinate to molecular oxygen, creating an electrochemical gradient over the inner membrane that drives transmembrane transport and the ATP synthase. Cytochrome c oxidase is the component of the respiratory chain that catalyzes the reduction of oxygen to water. Electrons originating from reduced cytochrome c in the intermembrane space (IMS) are transferred via the dinuclear copper A center (CU(A)) of subunit 2 and heme A of subunit 1 to the active site in subunit 1, a binuclear center (BNC) formed by heme A3 and copper B (CU(B)). The BNC reduces molecular oxygen to 2 water molecules using 4 electrons from cytochrome c in the IMS and 4 protons from the mitochondrial matrix. This chain is Cytochrome c oxidase subunit 2 (COX2), found in Brettanomyces custersianus (Yeast).